A 425-amino-acid polypeptide reads, in one-letter code: Aspartic protease 2 (425 aa).

The N-terminal stretch at 1–16 is a signal peptide; that stretch reads MRSILVLVALIGCIAA. Residues 72–421 enclose the Peptidase A1 domain; the sequence is YLGEITIGTP…DIEKKRIGFA (350 aa). Residue D90 is part of the active site. The cysteines at positions 103 and 145 are disulfide-linked. N-linked (GlcNAc...) asparagine glycans are attached at residues N163, N197, and N304. D316 is an active-site residue. C351 and C382 are oxidised to a cystine. Residues N354 and N365 are each glycosylated (N-linked (GlcNAc...) asparagine).

It belongs to the peptidase A1 family. In terms of processing, cleaved into a mature form. In terms of tissue distribution, expressed in intestine, amphidal glands and excretory gland (at protein level).

It is found in the secreted. Its activity is regulated as follows. Inhibited by pepstatin A. In terms of biological role, aspartic protease which cleaves several human serum proteins including hemoglobin, fibrinogen and albumin. Appears to cleave preferentially between P1 (Ala, Leu, Val, Phe and Gly) and P1' (Ala and Leu) residues. The polypeptide is Aspartic protease 2 (Necator americanus (Human hookworm)).